The following is a 136-amino-acid chain: uncharacterized protein (136 aa).

The protein belongs to the MG439/MG440 family.

This is an uncharacterized protein from Mycoplasma pneumoniae (strain ATCC 29342 / M129 / Subtype 1) (Mycoplasmoides pneumoniae).